Consider the following 396-residue polypeptide: MAKAKFERTKPHVNVGTIGHVDHGKTTLTAALTKIGAERFGGEFKAYDAIDAAPEEKARGITISTAHVEYESPSRHYAHVDCPGHADYVKNMITGAAQMDGAILVCSAADGPMPQTREHILLSRQVGVPHIVVFLNKADMVDDAELLELVEMEVRELLSKYDFPGDDTPIIHGSARLALDGDQSEIGVPAILKLVDALDTFIPEPTRDVDRPFLMPVEDVFSISGRGTVVTGRIERGIIKVGDEIEIVGIRATQKTTVTGVEMFRKLLDQGQAGDNAGLLLRGTKRDDVERGQVLCKPGSIKPHTEFEAEVYVLSKDEGGRHTPFFKGYRPQLYFRTTDITGAIDLPEGVEMVMPGDNVKMTVTLINPVAMDEGLRFAIREGGRTVGAGVVSKIIK.

Residues 10–206 (KPHVNVGTIG…ALDTFIPEPT (197 aa)) form the tr-type G domain. Residues 19–26 (GHVDHGKT) are G1. Residue 19–26 (GHVDHGKT) participates in GTP binding. Threonine 26 contacts Mg(2+). Residues 60-64 (GITIS) form a G2 region. Residues 81 to 84 (DCPG) form a G3 region. Residues 81 to 85 (DCPGH) and 136 to 139 (NKAD) contribute to the GTP site. The interval 136-139 (NKAD) is G4. The G5 stretch occupies residues 174–176 (SAR).

Belongs to the TRAFAC class translation factor GTPase superfamily. Classic translation factor GTPase family. EF-Tu/EF-1A subfamily. Monomer.

Its subcellular location is the cytoplasm. It carries out the reaction GTP + H2O = GDP + phosphate + H(+). Functionally, GTP hydrolase that promotes the GTP-dependent binding of aminoacyl-tRNA to the A-site of ribosomes during protein biosynthesis. The polypeptide is Elongation factor Tu (Xanthomonas oryzae pv. oryzae (strain MAFF 311018)).